Here is a 290-residue protein sequence, read N- to C-terminus: MAISKKSSLFLPIFTFITMFLMVVNKVSSSTHETNALHFMFNQFSKDQKDLILQGDATTGTDGNLELTRVSSNGSPQGSSVGRALFYAPVHIWESSAVVASFDATFTFLIKSPDSHPADGIAFFISNIDSSIPSGSTGRLLGLFPDANVIRNSTTIDFNAAYNADTIVAVELDTYPNTDIGDPNYPHIGIDIKSVRSKKTAKWNMQNGKVGTAHIIYNSVGKRLSAVVSYPNGDSATVSYDVDLDNVLPEWVRVGLSASTGLYKETNTILSWSFTSKLKSNEIPDIATVV.

The N-terminal stretch at 1–29 (MAISKKSSLFLPIFTFITMFLMVVNKVSS) is a signal peptide. A carbohydrate contacts are provided by Asp-119 and Arg-139. Ca(2+) is bound at residue Asp-119. Positions 149 to 163 (VIRNSTTIDFNAAYN) are excised as a propeptide. Asn-152 carries an N-linked (GlcNAc...) asparagine glycan. Mn(2+) is bound by residues Glu-171 and Asp-173. 4 residues coordinate Ca(2+): Asp-173, Tyr-175, Asn-177, and Asp-182. Positions 182 and 187 each coordinate Mn(2+). 262 to 263 (LY) provides a ligand contact to a carbohydrate. A propeptide spanning residues 282–290 (EIPDIATVV) is cleaved from the precursor.

Belongs to the leguminous lectin family. Homotetramer. Post-translationally, the mature chain consists of residues 164-281 followed by 30-148. To form a mature chain the precursor undergoes further post-translational modification after removal of the signal sequence; cleavage after Asn at positions Asn-148, Asn-163, and Asn-281 is followed by transposition and ligation (By formation of a new peptide bond) of residues 164-281 and 30-148.

Functionally, glucose/D-mannose/rhamnose specific lectin. Has hemagglutinating activity towards rabbit erythrocytes. Has mitogenic activity towards murine splenocytes that is inhibited by glucose. Inhibits HIV-1 reverse transcriptase with an IC(50) of 35 uM. Has a potent antiproliferative activity against L1210 leukemia cells in vitro that is not inhibited by glucose. Inhibits translation in cell-free rabbit reticulocyte system with an IC(50) of 2.08 uM. Lacks anti-fungal activity against M.arachidicola, B.cenera and F.oxysporum. The polypeptide is Concanavalin-A (Canavalia gladiata (Sword bean)).